A 1064-amino-acid chain; its full sequence is MSHEHPAEIVHQLQSIDSIQQDLADTAAAVVDAASQSLPPQHAAQDQKSHSTLLDNAEAMESILESAIPAAPGSSSTAAASDAIGDNNFTASGPPPISNTVVAPSAADDETGDVIVVESETPTTTNVVEAVVNPENDGDVPIESTEQSSGQPAEQPTEQPTEQPTEQPAEQPAVETPQAPQSTPAAPAASAVESIPTTLEETHLEQIVQAPAPTVHTEPLTPVVDIKMEEKPMIEHVAWIPPQGIHSDVFLPEGLTEYSPSVSQNGELIRSWRADPSNPTLLLSLFNWAVQKTEVEDARAWYRVLAVDNPTAAQPLLALINLELALSNFAEVEAIFASTLKGSAGITTAADVSIWAAYLHYIRRQNPLTEGSANAADVRSTITEAYEFALRECGFDRESGDIWDEYIKFVASGPATNQWDTQAKNDNLRKIYQRAVCIPLNNIEALWKSYDNFESSLNKLTAKKYLAEKSPAYMTARTALRELRALSDPIPKPILPPYPTFTEQDRQVVGAWKACLRWEEGNPLVIENHELLQSRIGYALRKCLGEMRHFPELWHYAASYYSKLGKQDEAAEILEAGVNACPKSFLLTFAYAELQEERKAFPTCHSLYTTLISKLNPEVDELRQNVAREIDIARGPPIPGSEKAAVAAAVGDSIDADGNDISDIQRLVEEREQRGALVAQRRGKDIEELMVGISVVWIMYMRFARRAEGIKAARGVFGKARKSPHLTWQVFEASALMEYHTNKDAAVAIRIFELGLKQFSEDVDYVIKYLQFLLSINDDNNARALFERSVVRIMGDKARPLWDAWARYEYTYGDLSAVHKLEARMSEVFPEDAPLKRFAQRWSYNGIDQIAIRDLGFNRARMGVAAPPAFAIAPVLPPVHASIPAPIAVPTPVQPPQESYKRPAPEDIPPRRPSSAEFSRSPKRHRAQSPPRRYPERDDRPPPGRYRDSLPPVKAPSSIPPPPLAGPAYATPSSGAYGGDKDRSGLEKPLAWFMAQLPNARSFDGPVFRPDDIMKLFGGLSLPGAGMPPAPPISRGPPPPPMQSRGYYEPERDRRYGGHGSGRY.

Disordered stretches follow at residues 34–106 and 119–192; these read ASQS…APSA and SETP…ASAV. Over residues 44-54 the composition is skewed to polar residues; it reads AQDQKSHSTLL. 2 stretches are compositionally biased toward low complexity: residues 66-86 and 151-191; these read SAIPAAPGSSSTAAASDAIGD and QPAE…AASA. HAT repeat units follow at residues 327 to 364, 377 to 412, 423 to 456, 673 to 706, and 777 to 811; these read SNFAEVEAIFASTLKGSAGITTAADVSIWAAYLHYIRR, DVRSTITEAYEFALRECGFDRESGDIWDEYIKFVAS, AKNDNLRKIYQRAVCIPLNNIEALWKSYDNFESS, QRGALVAQRRGKDIEELMVGISVVWIMYMRFARR, and NDDNNARALFERSVVRIMGDKARPLWDAWARYEYT. 2 disordered regions span residues 888–985 and 1022–1064; these read AVPT…DRSG and LPGA…SGRY. Basic and acidic residues-rich tracts occupy residues 899 to 910 and 933 to 948; these read SYKRPAPEDIPP and RYPERDDRPPPGRYRD. Residues 1026–1042 are compositionally biased toward pro residues; that stretch reads GMPPAPPISRGPPPPPM.

The protein resides in the nucleus. It is found in the cytoplasm. In terms of biological role, component of the cleavage factor IA (CFIA) complex, which is involved in the endonucleolytic cleavage during polyadenylation-dependent pre-mRNA 3'-end formation. This chain is mRNA 3'-end-processing protein RNA14 (RNA14), found in Cryptococcus neoformans var. neoformans serotype D (strain B-3501A) (Filobasidiella neoformans).